The following is a 709-amino-acid chain: Heme/hemopexin utilization protein C (709 aa).

A signal peptide spans 1–21; that stretch reads MRFSKLSLAITTTLVTANALA. In terms of domain architecture, TBDR plug spans 36–147; the sequence is DPSRFTYTPQ…LGGVVAMRTP (112 aa). Positions 158 to 709 constitute a TBDR beta-barrel domain; that stretch reads KFGVKIRQGY…NAKISAVYSF (552 aa). The TonB C-terminal box motif lies at 692–709; that stretch reads SLMEGTGRNAKISAVYSF.

The protein belongs to the TonB-dependent receptor family.

The protein resides in the cell outer membrane. Required for utilization of free heme at low concentrations. The polypeptide is Heme/hemopexin utilization protein C (hxuC) (Haemophilus influenzae (strain 86-028NP)).